A 471-amino-acid polypeptide reads, in one-letter code: Putative pentatricopeptide repeat-containing protein At1g53330 (471 aa).

10 PPR repeats span residues 46–81 (SLLC…RIVP), 82–116 (TEII…RCQR), 117–147 (TVKS…IDEF), 151–185 (DACT…KVKP), 186–221 (TGVT…GVRP), 222–256 (TVHI…KIKV), 257–291 (DAAI…GCKP), 292–326 (DTVT…GLKP), 327–361 (DVIS…GCSP), and 362–396 (DTLS…GYKP).

The protein belongs to the PPR family. P subfamily.

Functionally, involved during embryo development. The polypeptide is Putative pentatricopeptide repeat-containing protein At1g53330 (Arabidopsis thaliana (Mouse-ear cress)).